Consider the following 237-residue polypeptide: Dihydroceramide fatty acyl 2-hydroxylase FAH2 (237 aa).

Helical transmembrane passes span 54–74 and 77–97; these read VWWA…SISA and GLTF…WTLL. Residues His-102, His-107, His-123, His-126, and His-127 each contribute to the Zn(2+) site. 2 consecutive transmembrane segments (helical) span residues 134–154 and 156–176; these read LRLV…WKLL and LLAT…GYVM. Zn(2+) contacts are provided by His-181, His-185, His-201, His-204, and His-205.

This sequence belongs to the sterol desaturase family. Interacts with CYTB5-A, CYTB5-B, CYTB5-C and CYTB5-D. Requires Zn(2+) as cofactor. Expressed in leaves, roots, flowers and seeds.

The protein localises to the endoplasmic reticulum membrane. It carries out the reaction an N-(1,2-saturated acyl)sphinganine + 2 Fe(II)-[cytochrome b5] + O2 + 2 H(+) = an N-[(2'R)-hydroxyacyl]sphinganine + 2 Fe(III)-[cytochrome b5] + H2O. In terms of biological role, fatty acid 2-hydroxylase involved in the alpha-hydroxylation of the long-chain fatty acid (LCFA) palmitic acid. Probably involved in the resistance response to oxidative stress. The chain is Dihydroceramide fatty acyl 2-hydroxylase FAH2 from Arabidopsis thaliana (Mouse-ear cress).